Reading from the N-terminus, the 855-residue chain is Homeobox-leucine zipper protein HOX33 (855 aa).

The interval 1 to 21 (MAAAAVGGRGERLSSSSPTAA) is disordered. Residues 26 to 89 (DAGKYVRYTP…NRRCREKQRK (64 aa)) constitute a DNA-binding region (homeobox). A coiled-coil region spans residues 84-126 (REKQRKEASRLQTVNRKLNAMNKLLMEENDRLQKQVSRLVYEN). Positions 168–390 (DANNPAGLLA…LRHIRQIAHE (223 aa)) constitute an START domain.

It belongs to the HD-ZIP homeobox family. Class III subfamily. As to expression, expressed in seedlings, roots, stems, leaf sheaths and blades and panicles.

Its subcellular location is the nucleus. In terms of biological role, probable transcription factor. The polypeptide is Homeobox-leucine zipper protein HOX33 (HOX33) (Oryza sativa subsp. indica (Rice)).